The primary structure comprises 261 residues: RNA-binding protein 1 (261 aa).

Disordered stretches follow at residues 1–38 (MADG…SGNE) and 232–261 (QFSR…RGRR). An RRM domain is found at 151–236 (PTLYIEGLPS…SHLRLQFSRY (86 aa)). Positions 240–254 (RSGGGPRSSGPPRGG) are enriched in gly residues.

As to expression, ubiquitous.

It is found in the nucleus speckle. The protein resides in the cytoplasmic granule. In terms of biological role, RNA-binding protein interacting with the enod40 RNA. In Medicago truncatula (Barrel medic), this protein is RNA-binding protein 1.